The following is a 293-amino-acid chain: MPRSHDPSRVELLRKEGGLTEKRVSISVEDIRGAVANWKNSGGAGDPITPYPLPQFFLQPPSTAGGGSRNGVGSKEGSVTSLRMPLKKAGDDVDLGHRGELDLSEKYNYDLSRAQLKASSRTSALLAGFAMVCLVELQYDQSTPKPLLIVLGVVTSLLVSVHLLALMMSTCILPYMEATGCTQDSPHIKLKFYIDLSWLFSTCIGLLLFLVEIGVIFYVKFTAVGYPTAGYITTAMLVPVGVVFVVFSYLIHKNRVSHSLGRFKHKVDTMKQFLDVEANLQKSTLAPSTIRDI.

Topologically, residues 1-122 are cytoplasmic; sequence MPRSHDPSRV…RAQLKASSRT (122 aa). The disordered stretch occupies residues 62–81; the sequence is STAGGGSRNGVGSKEGSVTS. Residues 123–141 form a helical membrane-spanning segment; it reads SALLAGFAMVCLVELQYDQ. Over 142–146 the chain is Extracellular; it reads STPKP. Residues 147–167 form a helical membrane-spanning segment; that stretch reads LLIVLGVVTSLLVSVHLLALM. Topologically, residues 168 to 198 are cytoplasmic; it reads MSTCILPYMEATGCTQDSPHIKLKFYIDLSW. Residues 199 to 219 traverse the membrane as a helical segment; sequence LFSTCIGLLLFLVEIGVIFYV. Topologically, residues 220–230 are extracellular; sequence KFTAVGYPTAG. The helical transmembrane segment at 231–251 threads the bilayer; sequence YITTAMLVPVGVVFVVFSYLI. The Cytoplasmic portion of the chain corresponds to 252–293; that stretch reads HKNRVSHSLGRFKHKVDTMKQFLDVEANLQKSTLAPSTIRDI.

It belongs to the Orai family. Expressed in gonad sheath cells, hypodermis, intestine and spermatheca. Coexpressed with stim-1.

It is found in the membrane. Ca(2+) release-activated Ca(2+)-like (CRAC-like) channel subunit which mediates Ca(2+) influx and increase in Ca(2+)-selective current by synergy with the Ca(2+) sensor, stim-1. Required for Ca(2+) and IP3-dependent contractile activity of sheath cells and the spermatheca. Affects brood size and somatic cell function. The chain is Protein orai (orai-1) from Caenorhabditis elegans.